The sequence spans 131 residues: Transcription antitermination protein NusB (131 aa).

The protein belongs to the NusB family.

In terms of biological role, involved in transcription antitermination. Required for transcription of ribosomal RNA (rRNA) genes. Binds specifically to the boxA antiterminator sequence of the ribosomal RNA (rrn) operons. This is Transcription antitermination protein NusB from Campylobacter hominis (strain ATCC BAA-381 / DSM 21671 / CCUG 45161 / LMG 19568 / NCTC 13146 / CH001A).